The chain runs to 65 residues: Large ribosomal subunit protein bL35 (65 aa).

The disordered stretch occupies residues 1–25 (MPKMKSHRGAAKRFKKTGTGKLKRA).

The protein belongs to the bacterial ribosomal protein bL35 family.

This Clostridium botulinum (strain Alaska E43 / Type E3) protein is Large ribosomal subunit protein bL35.